A 464-amino-acid polypeptide reads, in one-letter code: Mitogen-activated protein kinase 10 (464 aa).

Residues 64–359 (YQNLKPIGSG…VDDALQHPYI (296 aa)) enclose the Protein kinase domain. ATP contacts are provided by residues 70–78 (IGSGAQGIV) and K93. D189 acts as the Proton acceptor in catalysis. A Phosphothreonine; by MAP2K7 modification is found at T221. A TXY motif is present at residues 221–223 (TPY). Y223 carries the phosphotyrosine; by MAP2K4 modification. Residues 405–464 (TKNGVVKSQPSPSGAAVNSSESLPPSSAVNDISSMSTDQTLASDTDSSLEASAGPLGCCR) are disordered. The span at 410-454 (VKSQPSPSGAAVNSSESLPPSSAVNDISSMSTDQTLASDTDSSLE) shows a compositional bias: polar residues. 2 S-palmitoyl cysteine lipidation sites follow: C462 and C463.

It belongs to the protein kinase superfamily. CMGC Ser/Thr protein kinase family. MAP kinase subfamily. As to quaternary structure, interacts with MAPK8IP1/JIP-1, MAPK8IP3/JIP-3/JSAP1 and SPAG9/MAPK8IP4/JIP4. Interacts with HDAC9 and MAPKBP1. Interacts with ARRB2; the interaction enhances MAPK10 activation by MAP3K5. Interacts with SARM1. Interacts with JUND; interaction is inhibited in the presence of MEN1. The cofactor is Mg(2+). Dually phosphorylated on Thr-221 and Tyr-223 by MAP2K4 and MAP2K7, which activates the enzyme. MAP2K7 shows a strong preference for Thr-221 while MAP2K4 phosphorylates Tyr-223 preferentially. Weakly autophosphorylated on threonine and tyrosine residues in vitro. In terms of processing, palmitoylation regulates subcellular location and axonal development. Brain (at protein level). Expressed specifically in neurons of the hippocampus, cortex, cerebellum, brainstem, and spinal cord. Seems to be also found in testis, and very weakly in the heart.

Its subcellular location is the cytoplasm. It localises to the membrane. It is found in the nucleus. The protein localises to the mitochondrion. It catalyses the reaction L-seryl-[protein] + ATP = O-phospho-L-seryl-[protein] + ADP + H(+). The catalysed reaction is L-threonyl-[protein] + ATP = O-phospho-L-threonyl-[protein] + ADP + H(+). Its activity is regulated as follows. Activated by threonine and tyrosine phosphorylation by two dual specificity kinases, MAP2K4 and MAP2K7. MAP2K7 phosphorylates MAPK10 on Thr-221 causing a conformational change and a large increase in Vmax for the enzyme. MAP2K4 then phosphorylates Tyr-223 resulting in a further increase in Vmax. Inhibited by dual specificity phosphatases, such as DUSP1. Inhibited by HDAC9. Serine/threonine-protein kinase involved in various processes such as neuronal proliferation, differentiation, migration and programmed cell death. Extracellular stimuli such as pro-inflammatory cytokines or physical stress stimulate the stress-activated protein kinase/c-Jun N-terminal kinase (SAP/JNK) signaling pathway. In this cascade, two dual specificity kinases MAP2K4/MKK4 and MAP2K7/MKK7 phosphorylate and activate MAPK10/JNK3. In turn, MAPK10/JNK3 phosphorylates a number of transcription factors, primarily components of AP-1 such as JUN and ATF2 and thus regulates AP-1 transcriptional activity. Plays regulatory roles in the signaling pathways during neuronal apoptosis. Phosphorylates the neuronal microtubule regulator STMN2. Acts in the regulation of the amyloid-beta precursor protein/APP signaling during neuronal differentiation by phosphorylating APP. Also participates in neurite growth in spiral ganglion neurons. Phosphorylates the CLOCK-BMAL1 heterodimer and plays a role in the photic regulation of the circadian clock. Phosphorylates JUND and this phosphorylation is inhibited in the presence of MEN1. This Mus musculus (Mouse) protein is Mitogen-activated protein kinase 10 (Mapk10).